The sequence spans 299 residues: Mitochondrial magnesium exporter 1 (299 aa).

3 Solcar repeats span residues 12-103, 112-200, and 210-296; these read SNPV…GKRL, LTYP…LQEL, and ISTT…TNDL. The next 4 helical transmembrane spans lie at 79–99, 114–134, 216–236, and 272–292; these read ISAPLVGVTPIYAVDFAVYAA, YPQIFAAGALAGVCSALVTVP, ILSGGTAGIVFWTLAVPFDVL, and ILPILLRAFPSTAAVFFGVEL.

This sequence belongs to the mitochondrial carrier (TC 2.A.29) family.

Its subcellular location is the mitochondrion membrane. Its function is as follows. Mediates efflux of magnesium ions from mitochondria, suggesting a role in magnesium homeostasis. The protein is Mitochondrial magnesium exporter 1 of Drosophila melanogaster (Fruit fly).